A 415-amino-acid chain; its full sequence is MEKNGAHSFLSDTPVTSLTMSVPVLRHPHVYHAFISYCADADTSHARTILDSVESRGFTCCFAERDFLPGECTSDVVVDAIHCSKNVILVISPASLQSEWSKFEMLMAVDDSHQRNNVCLVPVLLGGVKVDDLPPPLRPLTCIELMDDFRNTDDIIQAISKPEDTWESLLPVGNLAHGFAWGYYYGYLKIILPDLDKTVRQWRRVNNAEGRMSEKLFLFFPQSCRCRDSIADESSLIKHRGHLPIITKDRAGIIERQYKNTIYSVTDDNGEDYFFAGEYIGVIHTMFEMEQNATTGLQTREKYVQSMRFYLTLKRILDTDPECSKKCKIVFYKDVNNSSDAMPKLICNEIKNQLRKESSDDTTVCMTPFNSPFPSISSPDFARCSLKSPSSTNMVKSEPNIYREESGKTKSVERG.

Positions 29–163 constitute a TIR domain; sequence HVYHAFISYC…DIIQAISKPE (135 aa). The active site involves Glu-104. A 2',3'-cGAMP-binding site is contributed by Arg-256. The tract at residues 387-415 is disordered; that stretch reads KSPSSTNMVKSEPNIYREESGKTKSVERG. The segment covering 401 to 415 has biased composition (basic and acidic residues); it reads IYREESGKTKSVERG.

The protein in the N-terminal section; belongs to the Toll-like receptor family. It in the C-terminal section; belongs to the TMEM173 family. As to quaternary structure, homodimer.

It catalyses the reaction NAD(+) + H2O = ADP-D-ribose + nicotinamide + H(+). In terms of biological role, sensor of cytosolic DNA from bacteria and viruses that promotes autophagy. Binds c-di-AMP, 2'3'-cGAMP, 3'3'-cGAMP and to a lesser extent c-di-GMP. Nucleotide binding has not been seen to stimulate NAD(+) hydrolase activity. The sequence is that of Stimulator of interferon genes protein from Magallana gigas (Pacific oyster).